A 312-amino-acid polypeptide reads, in one-letter code: Zinc finger CCCH domain-containing protein 25 (312 aa).

In terms of domain architecture, RRM spans alanine 36–lysine 114. Residues arginine 130–glutamine 157 form a C3H1-type zinc finger. A disordered region spans residues serine 153–arginine 312. Composition is skewed to basic and acidic residues over residues serine 166–methionine 184, arginine 197–glycine 210, and glutamate 219–arginine 312.

This Oryza sativa subsp. japonica (Rice) protein is Zinc finger CCCH domain-containing protein 25.